The chain runs to 390 residues: Chorismate synthase 1 (390 aa).

Arg-39 and Arg-45 together coordinate NADP(+). The tract at residues 95–117 (EQEEKEMKRKVTKPRPGHADLNG) is disordered. Residues 132–134 (RSS), 253–254 (NA), Gly-298, 313–317 (KPIPT), and Arg-339 contribute to the FMN site.

Belongs to the chorismate synthase family. Homotetramer. FMNH2 is required as a cofactor.

The catalysed reaction is 5-O-(1-carboxyvinyl)-3-phosphoshikimate = chorismate + phosphate. Its pathway is metabolic intermediate biosynthesis; chorismate biosynthesis; chorismate from D-erythrose 4-phosphate and phosphoenolpyruvate: step 7/7. In terms of biological role, catalyzes the anti-1,4-elimination of the C-3 phosphate and the C-6 proR hydrogen from 5-enolpyruvylshikimate-3-phosphate (EPSP) to yield chorismate, which is the branch point compound that serves as the starting substrate for the three terminal pathways of aromatic amino acid biosynthesis. This reaction introduces a second double bond into the aromatic ring system. The polypeptide is Chorismate synthase 1 (Bacillus thuringiensis (strain Al Hakam)).